The following is a 213-amino-acid chain: Adenylate kinase (213 aa).

Residue 10-15 coordinates ATP; sequence GAGKGT. Positions 30 to 59 are NMP; that stretch reads STGDMFRAAIKEGTEMGKKAKEYMDKGALV. Residues threonine 31, arginine 36, 57 to 59, 85 to 88, and glutamine 92 each bind AMP; these read ALV and GFPR. Residues 126–163 form an LID region; it reads GRRVCKNCGASYHVIFNPPQAEGKCNSCNGELYQRSDD. ATP is bound at residue arginine 127. Zn(2+) is bound by residues cysteine 130 and cysteine 133. 136-137 contacts ATP; that stretch reads SY. Cysteine 150 and cysteine 153 together coordinate Zn(2+). AMP is bound by residues arginine 160 and arginine 171. Glutamine 199 contributes to the ATP binding site.

The protein belongs to the adenylate kinase family. In terms of assembly, monomer.

Its subcellular location is the cytoplasm. The enzyme catalyses AMP + ATP = 2 ADP. The protein operates within purine metabolism; AMP biosynthesis via salvage pathway; AMP from ADP: step 1/1. Functionally, catalyzes the reversible transfer of the terminal phosphate group between ATP and AMP. Plays an important role in cellular energy homeostasis and in adenine nucleotide metabolism. This Desulforamulus reducens (strain ATCC BAA-1160 / DSM 100696 / MI-1) (Desulfotomaculum reducens) protein is Adenylate kinase.